Here is a 473-residue protein sequence, read N- to C-terminus: Myocyte-specific enhancer factor 2C (473 aa).

One can recognise an MADS-box domain in the interval 1–61 (MGRKKIQITR…NKLFQYASTD (61 aa)). Position 4 is an N6-acetyllysine (lysine 4). A DNA-binding region (mef2-type) is located at residues 58 to 86 (ASTDMDKVLLKYTEYNEPHESRTNSDIVE). Serine 59 bears the Phosphoserine; by CK2 mark. The tract at residues 91 to 116 (KGLNGCDSPDPDADDSVGHSPESEDK) is disordered. Phosphoserine occurs at positions 98, 106, and 110. N6-acetyllysine occurs at positions 116 and 119. Positions 180–206 (NSMSPGVTHRPPSAGNTGGLMGGDLTS) are disordered. Phosphoserine occurs at positions 222 and 228. N6-acetyllysine is present on residues lysine 234 and lysine 239. Serine 240 is modified (phosphoserine). Residues lysine 252 and lysine 264 each carry the N6-acetyllysine modification. A beta domain region spans residues 271–278 (SEDVDLLL). Threonine 293 and threonine 300 each carry phosphothreonine; by MAPK14. The interval 368 to 399 (ACTSTHLSQSSNLSLPSTQSLNIKSEPVSPPR) is transcription repressor. A compositionally biased stretch (polar residues) spans 375 to 390 (SQSSNLSLPSTQSLNI). The segment at 375–473 (SQSSNLSLPS…RMRLSEGWAT (99 aa)) is disordered. Lysine 391 is covalently cross-linked (Glycyl lysine isopeptide (Lys-Gly) (interchain with G-Cter in SUMO)). Serine 396 is subject to Phosphoserine; by CDK5. At serine 419 the chain carries Phosphoserine; by MAPK7. Positions 419-432 (SPVDSLSSCSSSYD) are enriched in low complexity. Over residues 433-443 (GSDREDHRNEF) the composition is skewed to basic and acidic residues. Phosphoserine is present on serine 445.

It belongs to the MEF2 family. As to quaternary structure, forms a complex with class II HDACs in undifferentiating cells. On myogenic differentiation, HDACs are released into the cytoplasm allowing MEF2s to interact with other proteins for activation. Interacts with EP300 in differentiating cells; the interaction acetylates MEF2C leading to increased DNA binding and activation. Interacts with HDAC7 and CARM1. Interacts with HDAC4 and HDAC9; the interaction with HDACs represses transcriptional activity. Interacts with LPIN1. Interacts with MYOCD. Interacts with AKAP13. Interacts with FOXK1; the interaction inhibits MEF2C transactivation activity. Interacts (via N-terminus) with HABP4; this interaction decreases DNA-binding activity of MEF2C in myocardial cells in response to mechanical stress. Interacts with JPH2; interaction specifically takes place with the Junctophilin-2 N-terminal fragment cleavage product of JPH2. Interacts (via MADS box) with SOX18. Interacts with PHF7; the interaction promotes MEF2C binding to its transcription targets. In terms of processing, phosphorylated on Ser-59; which enhances DNA binding activity. Phosphorylated on Ser-396; which is required for Lys-391 sumoylation and inhibits transcriptional activity. Acetylated by p300 on several sites in diffentiating myocytes. Acetylation on Lys-4 increases DNA binding and transactivation. Post-translationally, sumoylated on Lys-391 with SUMO2 but not SUMO1; which represses transcriptional activity. In terms of processing, proteolytically cleaved in cerebellar granule neurons on several sites by caspase 3 and caspase 7 following neurotoxicity. Preferentially cleaves the CDK5-mediated hyperphosphorylated form which leads to neuron apoptosis and transcriptional inactivation. Expressed in the heart. Expressed in cardiac myocytes (at protein level).

It localises to the nucleus. The protein resides in the cytoplasm. The protein localises to the sarcoplasm. Functionally, transcription activator which binds specifically to the MEF2 element present in the regulatory regions of many muscle-specific genes. Controls cardiac morphogenesis and myogenesis, and is also involved in vascular development. Enhances transcriptional activation mediated by SOX18. Plays an essential role in hippocampal-dependent learning and memory by suppressing the number of excitatory synapses and thus regulating basal and evoked synaptic transmission. Crucial for normal neuronal development, distribution, and electrical activity in the neocortex. Necessary for proper development of megakaryocytes and platelets and for bone marrow B-lymphopoiesis. Required for B-cell survival and proliferation in response to BCR stimulation, efficient IgG1 antibody responses to T-cell-dependent antigens and for normal induction of germinal center B-cells. May also be involved in neurogenesis and in the development of cortical architecture. This is Myocyte-specific enhancer factor 2C from Rattus norvegicus (Rat).